The sequence spans 278 residues: Bifunctional protein FolD (278 aa).

NADP(+) contacts are provided by residues 162–164 (GAG) and isoleucine 228.

This sequence belongs to the tetrahydrofolate dehydrogenase/cyclohydrolase family. In terms of assembly, homodimer.

It catalyses the reaction (6R)-5,10-methylene-5,6,7,8-tetrahydrofolate + NADP(+) = (6R)-5,10-methenyltetrahydrofolate + NADPH. It carries out the reaction (6R)-5,10-methenyltetrahydrofolate + H2O = (6R)-10-formyltetrahydrofolate + H(+). The protein operates within one-carbon metabolism; tetrahydrofolate interconversion. In terms of biological role, catalyzes the oxidation of 5,10-methylenetetrahydrofolate to 5,10-methenyltetrahydrofolate and then the hydrolysis of 5,10-methenyltetrahydrofolate to 10-formyltetrahydrofolate. This chain is Bifunctional protein FolD, found in Hydrogenobaculum sp. (strain Y04AAS1).